We begin with the raw amino-acid sequence, 739 residues long: Adhesion G protein-coupled receptor L4 (739 aa).

A signal peptide spans 1–19 (MRLLPLLVGFSTLLNCSYT). The EGF-like 1 domain maps to 20 to 57 (QNCSKTTCLPNAKCEVHNGVEACFCSQGYSGNGVTICE). Residues 20-481 (QNCSKTTCLP…DYNILTRITQ (462 aa)) are Extracellular-facing. N-linked (GlcNAc...) asparagine glycosylation occurs at N21. 9 cysteine pairs are disulfide-bonded: C22/C33, C27/C42, C44/C56, C62/C74, C68/C83, C85/C106, C112/C124, C118/C133, and C135/C156. Positions 58-107 (DIDECSESSVCGDHAVCENVNGGFSCFCREGYQTATGKSQFTPNDGSYCQ) constitute an EGF-like 2; calcium-binding domain. The EGF-like 3; calcium-binding domain occupies 108–157 (DIDECSESSVCGDHAVCENVNGGFSCFCREGYQTATGKSQFTPNDGSYCQ). N-linked (GlcNAc...) asparagine glycans are attached at residues N176, N226, N237, N298, N422, N430, and N444. A GAIN-B domain is found at 293–468 (SQFDMNSTDL…AILMSSTSSI (176 aa)). Cystine bridges form between C418–C450 and C438–C452. Positions 418 to 468 (CAFWNYSVDAMNNGSWSTEGCELTHSNDTHTSCRCSHLTHFAILMSSTSSI) are GPS. The chain crosses the membrane as a helical span at residues 482-502 (LGIIISLICLAICIFTFWFFS). Over 503–513 (EIQSTRTTIHK) the chain is Cytoplasmic. The helical transmembrane segment at 514–534 (NLCCSLFLAELVFLIGININT) threads the bilayer. Residues 535 to 548 (NKLVCSIIAGLLHY) lie on the Extracellular side of the membrane. The helical transmembrane segment at 549 to 569 (FFLAAFAWMCIEGIHLYLIVV) threads the bilayer. Over 570–581 (GVIYNKGFLHKN) the chain is Cytoplasmic. Residues 582–602 (FYIFGYLSPAVVVGFSASLGY) traverse the membrane as a helical segment. At 603–622 (RYYGTTKVCWLSTENNFIWS) the chain is on the extracellular side. Residues 623–643 (FIGPACLIILVNLLAFGVIIY) form a helical membrane-spanning segment. The Cytoplasmic segment spans residues 644–667 (KVFRHTAGLKPEVSCYENIRSCAR). The helical transmembrane segment at 668–688 (GALALLFLLGTTWIFGVLHVV) threads the bilayer. The Extracellular segment spans residues 689-695 (HASVVTA). The helical transmembrane segment at 696–716 (YLFTVSNAFQGMFIFLFLCVL) threads the bilayer. The Cytoplasmic segment spans residues 717–739 (SRKIQEEYYRLFKNVPCCFGCLR).

It belongs to the G-protein coupled receptor 2 family. Adhesion G-protein coupled receptor (ADGR) subfamily. In terms of assembly, heterodimer of 2 chains generated by proteolytic processing; the large extracellular N-terminal fragment and the membrane-bound C-terminal fragment predominantly remain associated and non-covalently linked. Glycosylated. Post-translationally, proteolytically cleaved into 2 subunits, an extracellular alpha subunit and a seven-transmembrane subunit.

It localises to the cell membrane. In terms of biological role, endothelial orphan receptor that acts as a key regulator of angiogenesis. This chain is Adhesion G protein-coupled receptor L4 (Adgrl4), found in Mus musculus (Mouse).